A 628-amino-acid chain; its full sequence is ATP-dependent zinc metalloprotease FtsH (628 aa).

Topologically, residues 1-7 (MKLSWKT) are stromal. The helical transmembrane segment at 8 to 28 (LLLWSLPIFVIGFFFWQGFLG) threads the bilayer. At 29–118 (PTTTDVGSNI…AHPPKSTSAV (90 aa)) the chain is on the lumenal side. Residues 119-139 (WGLLGNLLFPLLLVGGLAFLF) traverse the membrane as a helical segment. Over 140 to 628 (RRSNNASGGP…PEKNYYISQF (489 aa)) the chain is Stromal. 213–220 (GPPGTGKT) is an ATP binding site. Zn(2+) is bound at residue histidine 434. Glutamate 435 is a catalytic residue. Zn(2+)-binding residues include histidine 438 and aspartate 512.

This sequence in the central section; belongs to the AAA ATPase family. It in the C-terminal section; belongs to the peptidase M41 family. Homohexamer. Zn(2+) is required as a cofactor.

Its subcellular location is the plastid. The protein resides in the chloroplast thylakoid membrane. Functionally, acts as a processive, ATP-dependent zinc metallopeptidase. The sequence is that of ATP-dependent zinc metalloprotease FtsH from Pyropia yezoensis (Susabi-nori).